Consider the following 998-residue polypeptide: UPF0182 protein AAur_2732 (998 aa).

7 consecutive transmembrane segments (helical) span residues 18-38 (GALTPTLIVVAVAVVGFIFFA), 64-84 (IITFLIGFAMMFAAVFFAIRI), 115-135 (VVMIGLPILFGLFAGSAAASQ), 168-188 (FLGFITGFLISIAVVAGIAGI), 211-231 (QIHIAVTGALFLILLGVNFWL), 260-280 (AILAVAAGLVAILFIIAAIIG), and 287-307 (IGTAMLVITAILAGGVYPWVI). 3 disordered regions span residues 490–518 (GAPDGAPNREQDRPAGREGGGETQYTFSG), 888–923 (LFGGDSGATAGDSDNNGQTPTSPPGTTPPPAGPTDA), and 971–998 (QARLDATPAPTATPGATPSATPSPSPSS). Positions 496-509 (PNREQDRPAGREGG) are enriched in basic and acidic residues. The segment covering 908–919 (TSPPGTTPPPAG) has biased composition (pro residues). Residues 976 to 990 (ATPAPTATPGATPSA) are compositionally biased toward low complexity.

It belongs to the UPF0182 family.

The protein localises to the cell membrane. This Paenarthrobacter aurescens (strain TC1) protein is UPF0182 protein AAur_2732.